The primary structure comprises 151 residues: D-aminoacyl-tRNA deacylase (151 aa).

The Gly-cisPro motif, important for rejection of L-amino acids signature appears at Gly-137 to Pro-138.

Belongs to the DTD family. Homodimer.

It is found in the cytoplasm. The enzyme catalyses glycyl-tRNA(Ala) + H2O = tRNA(Ala) + glycine + H(+). It carries out the reaction a D-aminoacyl-tRNA + H2O = a tRNA + a D-alpha-amino acid + H(+). Functionally, an aminoacyl-tRNA editing enzyme that deacylates mischarged D-aminoacyl-tRNAs. Also deacylates mischarged glycyl-tRNA(Ala), protecting cells against glycine mischarging by AlaRS. Acts via tRNA-based rather than protein-based catalysis; rejects L-amino acids rather than detecting D-amino acids in the active site. By recycling D-aminoacyl-tRNA to D-amino acids and free tRNA molecules, this enzyme counteracts the toxicity associated with the formation of D-aminoacyl-tRNA entities in vivo and helps enforce protein L-homochirality. The sequence is that of D-aminoacyl-tRNA deacylase from Geobacter metallireducens (strain ATCC 53774 / DSM 7210 / GS-15).